The sequence spans 210 residues: Troponin I, cardiac muscle (210 aa).

The tract at residues Met1–Ala43 is disordered. Residue Ala2 is modified to N-acetylalanine. Ser5 and Ser6 each carry phosphoserine. Residues Ser23 and Ser24 each carry the phosphoserine; by PKA and PKD/PRKD1 modification. The residue at position 26 (Tyr26) is a Phosphotyrosine. Thr31 carries the phosphothreonine; by STK4/MST1 modification. The tract at residues Glu32 to Arg79 is involved in binding TNC. 2 positions are modified to phosphoserine; by PKC/PRKCE: Ser42 and Ser44. At Thr51 the chain carries Phosphothreonine; by STK4/MST1. Ser77 carries the phosphoserine modification. At Thr78 the chain carries Phosphothreonine. 2 positions are modified to phosphothreonine; by STK4/MST1: Thr129 and Thr143. The interval Thr129–Ile149 is involved in binding TNC and actin. Residue Ser150 is modified to Phosphoserine; by PAK3. Ser166 is modified (phosphoserine). At Thr181 the chain carries Phosphothreonine. Phosphoserine is present on Ser199.

This sequence belongs to the troponin I family. In terms of assembly, binds to actin and tropomyosin. Interacts with TRIM63. Interacts with STK4/MST1. Phosphorylated at Ser-42 and Ser-44 by PRKCE; phosphorylation increases myocardium contractile dysfunction. Phosphorylated at Ser-23 and Ser-24 by PRKD1; phosphorylation reduces myofilament calcium sensitivity. Phosphorylated preferentially at Thr-31. Phosphorylation by STK4/MST1 alters its binding affinity to TNNC1 (cardiac Tn-C) and TNNT2 (cardiac Tn-T).

Troponin I is the inhibitory subunit of troponin, the thin filament regulatory complex which confers calcium-sensitivity to striated muscle actomyosin ATPase activity. The sequence is that of Troponin I, cardiac muscle (TNNI3) from Homo sapiens (Human).